A 215-amino-acid chain; its full sequence is N-(5'-phosphoribosyl)anthranilate isomerase (215 aa).

It belongs to the TrpF family.

The catalysed reaction is N-(5-phospho-beta-D-ribosyl)anthranilate = 1-(2-carboxyphenylamino)-1-deoxy-D-ribulose 5-phosphate. The protein operates within amino-acid biosynthesis; L-tryptophan biosynthesis; L-tryptophan from chorismate: step 3/5. This chain is N-(5'-phosphoribosyl)anthranilate isomerase, found in Ruegeria sp. (strain TM1040) (Silicibacter sp.).